The following is a 130-amino-acid chain: DNA-directed RNA polymerase subunit omega (130 aa).

Disordered regions lie at residues 80–99 (PEPD…DADD) and 110–130 (EELL…EEDE). Basic and acidic residues predominate over residues 110–124 (EELLKGLEGLAPREE).

It belongs to the RNA polymerase subunit omega family. As to quaternary structure, the RNAP catalytic core consists of 2 alpha, 1 beta, 1 beta' and 1 omega subunit. When a sigma factor is associated with the core the holoenzyme is formed, which can initiate transcription.

The catalysed reaction is RNA(n) + a ribonucleoside 5'-triphosphate = RNA(n+1) + diphosphate. Its function is as follows. Promotes RNA polymerase assembly. Latches the N- and C-terminal regions of the beta' subunit thereby facilitating its interaction with the beta and alpha subunits. This chain is DNA-directed RNA polymerase subunit omega, found in Nitrobacter hamburgensis (strain DSM 10229 / NCIMB 13809 / X14).